The chain runs to 331 residues: Ubiquinone biosynthesis protein UbiU (331 aa).

C169, C176, C193, and C232 together coordinate [4Fe-4S] cluster.

The protein belongs to the peptidase U32 family. UbiU subfamily. Forms a heterodimer with UbiV. [4Fe-4S] cluster serves as cofactor.

It functions in the pathway cofactor biosynthesis; ubiquinone biosynthesis. Required for O(2)-independent ubiquinone (coenzyme Q) biosynthesis. Together with UbiV, is essential for the C6-hydroxylation reaction in the oxygen-independent ubiquinone biosynthesis pathway. The polypeptide is Ubiquinone biosynthesis protein UbiU (Escherichia coli (strain K12)).